Here is a 391-residue protein sequence, read N- to C-terminus: S-adenosylmethionine synthase 5 (391 aa).

Glu-9 is a binding site for Mg(2+). His-15 contributes to the ATP binding site. Glu-43 contributes to the K(+) binding site. L-methionine-binding residues include Glu-56 and Gln-99. Residues 167 to 169 (DGK), 235 to 238 (SGRF), Asp-246, 252 to 253 (RK), Ala-269, Lys-273, and Lys-277 contribute to the ATP site. Asp-246 provides a ligand contact to L-methionine. Lys-277 contacts L-methionine.

Belongs to the AdoMet synthase family. Homotetramer. The cofactor is Mn(2+). Mg(2+) serves as cofactor. Co(2+) is required as a cofactor. Requires K(+) as cofactor.

It localises to the cytoplasm. The catalysed reaction is L-methionine + ATP + H2O = S-adenosyl-L-methionine + phosphate + diphosphate. Its pathway is amino-acid biosynthesis; S-adenosyl-L-methionine biosynthesis; S-adenosyl-L-methionine from L-methionine: step 1/1. Functionally, catalyzes the formation of S-adenosylmethionine from methionine and ATP. The reaction comprises two steps that are both catalyzed by the same enzyme: formation of S-adenosylmethionine (AdoMet) and triphosphate, and subsequent hydrolysis of the triphosphate. This is S-adenosylmethionine synthase 5 (METK5) from Vitis vinifera (Grape).